Reading from the N-terminus, the 231-residue chain is Large ribosomal subunit protein uL1 (231 aa).

It belongs to the universal ribosomal protein uL1 family. As to quaternary structure, part of the 50S ribosomal subunit.

Functionally, binds directly to 23S rRNA. The L1 stalk is quite mobile in the ribosome, and is involved in E site tRNA release. Its function is as follows. Protein L1 is also a translational repressor protein, it controls the translation of the L11 operon by binding to its mRNA. The polypeptide is Large ribosomal subunit protein uL1 (Herminiimonas arsenicoxydans).